A 290-amino-acid polypeptide reads, in one-letter code: 33 kDa chaperonin (290 aa).

Intrachain disulfides connect Cys-231-Cys-233 and Cys-263-Cys-266.

This sequence belongs to the HSP33 family. Post-translationally, under oxidizing conditions two disulfide bonds are formed involving the reactive cysteines. Under reducing conditions zinc is bound to the reactive cysteines and the protein is inactive.

Its subcellular location is the cytoplasm. Functionally, redox regulated molecular chaperone. Protects both thermally unfolding and oxidatively damaged proteins from irreversible aggregation. Plays an important role in the bacterial defense system toward oxidative stress. The sequence is that of 33 kDa chaperonin from Thermotoga maritima (strain ATCC 43589 / DSM 3109 / JCM 10099 / NBRC 100826 / MSB8).